A 59-amino-acid chain; its full sequence is uncharacterized protein (59 aa).

A helical transmembrane segment spans residues 7–24 (FLLVFIILAQLLSCTPSA).

It is found in the membrane. This is an uncharacterized protein from Rickettsia prowazekii (strain Madrid E).